Here is a 296-residue protein sequence, read N- to C-terminus: MPELPEVETVKRGLTPAMEGTRVTRLELRRGDLRFPFPDAFADRVSGRTIVGLGRRAKYLLVDLDDGNTLISHLGMSGSFRIEEGAASGVPGEFHHARSKDEKHDHVVFHLQAASGLRRVVYNDPRRFGFMDMVGRADLATHPFFRDLGPEPTGNELSAAYLAERFRDKAQPLKSALLDQKNIAGLGNIYVCEALWRSHLSPIRAAGTLVTAGGRPKAQLDLLVASIRDVIADAIAAGGSSLRDHIQTDGSLGYFQHSFSVYDRESQACRTPGCGGTVARIVQAGRSTFYCATCQK.

The active-site Schiff-base intermediate with DNA is Pro-2. The Proton donor role is filled by Glu-3. Lys-58 (proton donor; for beta-elimination activity) is an active-site residue. Residues His-104, Arg-126, and Lys-169 each coordinate DNA. The FPG-type zinc-finger motif lies at Ser-260 to Lys-296. The active-site Proton donor; for delta-elimination activity is the Arg-286.

This sequence belongs to the FPG family. As to quaternary structure, monomer. Zn(2+) is required as a cofactor.

It carries out the reaction Hydrolysis of DNA containing ring-opened 7-methylguanine residues, releasing 2,6-diamino-4-hydroxy-5-(N-methyl)formamidopyrimidine.. The enzyme catalyses 2'-deoxyribonucleotide-(2'-deoxyribose 5'-phosphate)-2'-deoxyribonucleotide-DNA = a 3'-end 2'-deoxyribonucleotide-(2,3-dehydro-2,3-deoxyribose 5'-phosphate)-DNA + a 5'-end 5'-phospho-2'-deoxyribonucleoside-DNA + H(+). Its function is as follows. Involved in base excision repair of DNA damaged by oxidation or by mutagenic agents. Acts as a DNA glycosylase that recognizes and removes damaged bases. Has a preference for oxidized purines, such as 7,8-dihydro-8-oxoguanine (8-oxoG). Has AP (apurinic/apyrimidinic) lyase activity and introduces nicks in the DNA strand. Cleaves the DNA backbone by beta-delta elimination to generate a single-strand break at the site of the removed base with both 3'- and 5'-phosphates. This is Formamidopyrimidine-DNA glycosylase from Rhizobium johnstonii (strain DSM 114642 / LMG 32736 / 3841) (Rhizobium leguminosarum bv. viciae).